Consider the following 424-residue polypeptide: Serine--tRNA ligase (424 aa).

Residue 229 to 231 (TAE) coordinates L-serine. 260-262 (RRE) serves as a coordination point for ATP. Glu-283 contributes to the L-serine binding site. 347 to 350 (EVSS) serves as a coordination point for ATP. Position 383 (Ser-383) interacts with L-serine.

Belongs to the class-II aminoacyl-tRNA synthetase family. Type-1 seryl-tRNA synthetase subfamily. As to quaternary structure, homodimer. The tRNA molecule binds across the dimer.

It is found in the cytoplasm. The catalysed reaction is tRNA(Ser) + L-serine + ATP = L-seryl-tRNA(Ser) + AMP + diphosphate + H(+). It carries out the reaction tRNA(Sec) + L-serine + ATP = L-seryl-tRNA(Sec) + AMP + diphosphate + H(+). It functions in the pathway aminoacyl-tRNA biosynthesis; selenocysteinyl-tRNA(Sec) biosynthesis; L-seryl-tRNA(Sec) from L-serine and tRNA(Sec): step 1/1. Its function is as follows. Catalyzes the attachment of serine to tRNA(Ser). Is also able to aminoacylate tRNA(Sec) with serine, to form the misacylated tRNA L-seryl-tRNA(Sec), which will be further converted into selenocysteinyl-tRNA(Sec). The sequence is that of Serine--tRNA ligase from Roseiflexus castenholzii (strain DSM 13941 / HLO8).